Here is a 2273-residue protein sequence, read N- to C-terminus: Acetyl-CoA carboxylase, mitochondrial (2273 aa).

Residues 1 to 104 (KGKTITHGQS…RGNIHKHTRL (104 aa)) constitute a mitochondrion transit peptide. A Biotin carboxylation domain is found at 134-635 (VISKILIANN…STGWLDDLIL (502 aa)). The region spanning 292 to 484 (KTNFVSVPDD…LPATQLQIAM (193 aa)) is the ATP-grasp domain. 332–337 (GGGGKG) is a binding site for ATP. Arg-459 is an active-site residue. Residues 763–837 (LEAELNPTQV…EAGDVIAKLT (75 aa)) enclose the Biotinyl-binding domain. Lys-804 bears the N6-biotinyllysine mark. The 336-residue stretch at 1532 to 1867 (PYSVKDWLQP…KRDMSPPLLE (336 aa)) folds into the CoA carboxyltransferase N-terminal domain. Residues 1532-2187 (PYSVKDWLQP…EGQVIKRLQK (656 aa)) form a carboxyltransferase region. Residues Arg-1776, Lys-2080, and Arg-2082 each contribute to the CoA site. The region spanning 1871-2187 (RWDRDVDFKP…EGQVIKRLQK (317 aa)) is the CoA carboxyltransferase C-terminal domain.

It depends on biotin as a cofactor.

It localises to the mitochondrion. The enzyme catalyses hydrogencarbonate + acetyl-CoA + ATP = malonyl-CoA + ADP + phosphate + H(+). It catalyses the reaction N(6)-biotinyl-L-lysyl-[protein] + hydrogencarbonate + ATP = N(6)-carboxybiotinyl-L-lysyl-[protein] + ADP + phosphate + H(+). The protein operates within lipid metabolism; malonyl-CoA biosynthesis; malonyl-CoA from acetyl-CoA: step 1/1. Catalyzes the rate-limiting reaction in the mitochondrial fatty acid synthesis (FAS) type II pathway. Responsible for the production of the mitochondrial malonyl-CoA, used for the biosynthesis of the cofactor lipoic acid. This protein carries three functions: biotin carboxyl carrier protein, biotin carboxylase, and carboxyltransferase. In Saccharomyces cerevisiae (strain JAY291) (Baker's yeast), this protein is Acetyl-CoA carboxylase, mitochondrial (HFA1).